The chain runs to 690 residues: Elongation factor G (690 aa).

In terms of domain architecture, tr-type G spans 8-282; that stretch reads DKVRNIGIMA…AIVNYLPSPL (275 aa). GTP is bound by residues 17-24, 81-85, and 135-138; these read AHIDAGKT, DTPGH, and NKMD.

This sequence belongs to the TRAFAC class translation factor GTPase superfamily. Classic translation factor GTPase family. EF-G/EF-2 subfamily.

The protein localises to the cytoplasm. In terms of biological role, catalyzes the GTP-dependent ribosomal translocation step during translation elongation. During this step, the ribosome changes from the pre-translocational (PRE) to the post-translocational (POST) state as the newly formed A-site-bound peptidyl-tRNA and P-site-bound deacylated tRNA move to the P and E sites, respectively. Catalyzes the coordinated movement of the two tRNA molecules, the mRNA and conformational changes in the ribosome. In Caldanaerobacter subterraneus subsp. tengcongensis (strain DSM 15242 / JCM 11007 / NBRC 100824 / MB4) (Thermoanaerobacter tengcongensis), this protein is Elongation factor G.